Here is a 351-residue protein sequence, read N- to C-terminus: Uroporphyrinogen decarboxylase (351 aa).

Substrate is bound by residues 32-36 (RQAGR), phenylalanine 51, aspartate 82, tyrosine 157, serine 211, and histidine 326.

It belongs to the uroporphyrinogen decarboxylase family. In terms of assembly, homodimer.

It is found in the cytoplasm. The enzyme catalyses uroporphyrinogen III + 4 H(+) = coproporphyrinogen III + 4 CO2. It participates in porphyrin-containing compound metabolism; protoporphyrin-IX biosynthesis; coproporphyrinogen-III from 5-aminolevulinate: step 4/4. Catalyzes the decarboxylation of four acetate groups of uroporphyrinogen III to yield coproporphyrinogen III. The protein is Uroporphyrinogen decarboxylase of Caulobacter vibrioides (strain ATCC 19089 / CIP 103742 / CB 15) (Caulobacter crescentus).